The following is a 255-amino-acid chain: Cell division protein ZapD (255 aa).

This sequence belongs to the ZapD family. Interacts with FtsZ.

It localises to the cytoplasm. Cell division factor that enhances FtsZ-ring assembly. Directly interacts with FtsZ and promotes bundling of FtsZ protofilaments, with a reduction in FtsZ GTPase activity. This is Cell division protein ZapD from Methylococcus capsulatus (strain ATCC 33009 / NCIMB 11132 / Bath).